We begin with the raw amino-acid sequence, 64 residues long: Large ribosomal subunit protein bL35 (64 aa).

Belongs to the bacterial ribosomal protein bL35 family.

The protein is Large ribosomal subunit protein bL35 of Vibrio vulnificus (strain CMCP6).